The chain runs to 263 residues: Transcription factor 19-like protein (263 aa).

Residues 31–88 form the FHA domain; the sequence is YGLGCRADLCDVALRPQQEPGLISGVHAELHAELQGDDWRVSLEDHSSQGTLVNNVRL. Serine 78 carries the phosphoserine modification. Disordered regions lie at residues 140–164 and 189–225; these read SKGE…PLST and LTFS…RKSA.

Its subcellular location is the nucleus. Potential transcription factor that may play a role in the regulation of genes involved in cell cycle G1/S transition. May bind to regulatory elements of genes, including the promoter of the transcription factor FOXO1. The protein is Transcription factor 19-like protein (Tcf19) of Mus musculus (Mouse).